The chain runs to 182 residues: ATP-dependent protease subunit HslV (182 aa).

Residue T12 is part of the active site. 3 residues coordinate Na(+): A167, C170, and T173.

This sequence belongs to the peptidase T1B family. HslV subfamily. A double ring-shaped homohexamer of HslV is capped on each side by a ring-shaped HslU homohexamer. The assembly of the HslU/HslV complex is dependent on binding of ATP.

The protein localises to the cytoplasm. It carries out the reaction ATP-dependent cleavage of peptide bonds with broad specificity.. With respect to regulation, allosterically activated by HslU binding. In terms of biological role, protease subunit of a proteasome-like degradation complex believed to be a general protein degrading machinery. This is ATP-dependent protease subunit HslV from Chlorobium limicola (strain DSM 245 / NBRC 103803 / 6330).